Consider the following 518-residue polypeptide: MANCVRCCCWLLVLMLMALAITAAVVFVRYKNGEGVFPFPGVPGAVDHKYADALAVALQFFQVQKSGKLVNNTIHWRGDSALDDGKEAGIDLSKGMYDAGDHMKFGFPMAFTATMLSWSVLEYGDAMRAADQRDSAIDALNWIMDYLVNAHPSDDVLYIQVGDPKADHKCWERPEKMKEKRPLTKITPKSPGSDVAAETAAAMAAASLVYKTINKTYSSSLLDHGERLFAFADKHRGSYTRTFPELSAFYNSTTYQDELLWAASWLYHATGNHSYLAYATGKNKDFADLGNPRYFSWDDKRAGTEVLLSRVSFFASQGSDVAQDDVLGMYKQTADAVMCILLPDSETAAFRTEGGLLYVAEWNSLQHPVASAFLAAVYSDYMQSSGKTELSCSGQGFSPADLRKFAKSQADYLLGSNPMKISYLVGYGDRYPEKVHHRGASIPEDVDTGCDGHKWLETSKPNPNVATGALVGGPYKNDSFVDERDNVMQNEATTYNSALVAGLLSALVSTSSLARSLS.

Residues 1 to 35 (MANCVRCCCWLLVLMLMALAITAAVVFVRYKNGEG) lie on the Cytoplasmic side of the membrane. A helical membrane pass occupies residues 36–56 (VFPFPGVPGAVDHKYADALAV). The Extracellular portion of the chain corresponds to 57–518 (ALQFFQVQKS…STSSLARSLS (462 aa)). Asn71 carries N-linked (GlcNAc...) asparagine glycosylation. Residue Asp101 is the Nucleophile of the active site. Asn214, Asn251, and Asn272 each carry an N-linked (GlcNAc...) asparagine glycan. Residue His436 is part of the active site. A glycan (N-linked (GlcNAc...) asparagine) is linked at Asn477. Residues Asp482 and Glu491 contribute to the active site.

It belongs to the glycosyl hydrolase 9 (cellulase E) family.

It is found in the membrane. It catalyses the reaction Endohydrolysis of (1-&gt;4)-beta-D-glucosidic linkages in cellulose, lichenin and cereal beta-D-glucans.. The protein is Endoglucanase 18 of Oryza sativa subsp. japonica (Rice).